Consider the following 232-residue polypeptide: Enolase-phosphatase E1 (232 aa).

It belongs to the HAD-like hydrolase superfamily. MasA/MtnC family. Monomer. Requires Mg(2+) as cofactor.

It carries out the reaction 5-methylsulfanyl-2,3-dioxopentyl phosphate + H2O = 1,2-dihydroxy-5-(methylsulfanyl)pent-1-en-3-one + phosphate. It functions in the pathway amino-acid biosynthesis; L-methionine biosynthesis via salvage pathway; L-methionine from S-methyl-5-thio-alpha-D-ribose 1-phosphate: step 3/6. It participates in amino-acid biosynthesis; L-methionine biosynthesis via salvage pathway; L-methionine from S-methyl-5-thio-alpha-D-ribose 1-phosphate: step 4/6. Its function is as follows. Bifunctional enzyme that catalyzes the enolization of 2,3-diketo-5-methylthiopentyl-1-phosphate (DK-MTP-1-P) into the intermediate 2-hydroxy-3-keto-5-methylthiopentenyl-1-phosphate (HK-MTPenyl-1-P), which is then dephosphorylated to form the acireductone 1,2-dihydroxy-3-keto-5-methylthiopentene (DHK-MTPene). The sequence is that of Enolase-phosphatase E1 from Xylella fastidiosa (strain Temecula1 / ATCC 700964).